The chain runs to 220 residues: Fructose-6-phosphate aldolase 1 (220 aa).

The active-site Schiff-base intermediate with substrate is the lysine 85.

It belongs to the transaldolase family. Type 3A subfamily. In terms of assembly, homodecamer.

The protein resides in the cytoplasm. The enzyme catalyses beta-D-fructose 6-phosphate = dihydroxyacetone + D-glyceraldehyde 3-phosphate. Functionally, catalyzes the reversible formation of fructose 6-phosphate from dihydroxyacetone and D-glyceraldehyde 3-phosphate via an aldolization reaction. The protein is Fructose-6-phosphate aldolase 1 (fsaA) of Escherichia coli O157:H7.